A 158-amino-acid polypeptide reads, in one-letter code: Secreted RxLR effector protein 131 (158 aa).

The N-terminal stretch at Met1 to Gly20 is a signal peptide. The RxLR-dEER motif lies at Arg39–Arg57. The segment at Lys120–Glu158 is host BKI1-binding. The helical transmembrane segment at Ala127–Ile147 threads the bilayer. An N-linked (GlcNAc...) asparagine glycan is attached at Asn150.

The protein belongs to the RxLR effector family. As to quaternary structure, interacts with host BKI1.

The protein resides in the secreted. It localises to the host cell membrane. Its function is as follows. Secreted effector that suppresses pathogen-associated molecular pattern (PAMP)-triggered immunity (PTI) in host plants. Suppresses both defense-related brassinosteroid (BR) and ERECTA (ER) signaling pathways in planta by interacting with host BRI1 kinase inhibitor 1 (BKI1) at the host plasma membrane, leading to a host dwarf phenotype. This is Secreted RxLR effector protein 131 from Plasmopara viticola (Downy mildew of grapevine).